We begin with the raw amino-acid sequence, 106 residues long: Small ribosomal subunit protein mS33 (106 aa).

Ser2 is modified (N-acetylserine). The tract at residues 81 to 106 (EQRRLKKLRGKGKPRKGEGKRATKKK) is disordered. Residues 84–94 (RLKKLRGKGKP) show a composition bias toward basic residues. Residues 95–106 (RKGEGKRATKKK) are compositionally biased toward basic and acidic residues.

This sequence belongs to the mitochondrion-specific ribosomal protein mS33 family. In terms of assembly, component of the mitochondrial ribosome small subunit (28S) which comprises a 12S rRNA and about 30 distinct proteins.

Its subcellular location is the mitochondrion. In Mus musculus (Mouse), this protein is Small ribosomal subunit protein mS33 (Mrps33).